The following is a 229-amino-acid chain: 2-C-methyl-D-erythritol 4-phosphate cytidylyltransferase (229 aa).

The protein belongs to the IspD/TarI cytidylyltransferase family. IspD subfamily.

It catalyses the reaction 2-C-methyl-D-erythritol 4-phosphate + CTP + H(+) = 4-CDP-2-C-methyl-D-erythritol + diphosphate. It functions in the pathway isoprenoid biosynthesis; isopentenyl diphosphate biosynthesis via DXP pathway; isopentenyl diphosphate from 1-deoxy-D-xylulose 5-phosphate: step 2/6. Its function is as follows. Catalyzes the formation of 4-diphosphocytidyl-2-C-methyl-D-erythritol from CTP and 2-C-methyl-D-erythritol 4-phosphate (MEP). The chain is 2-C-methyl-D-erythritol 4-phosphate cytidylyltransferase from Neisseria meningitidis serogroup A / serotype 4A (strain DSM 15465 / Z2491).